The chain runs to 73 residues: Nodulin-1 (73 aa).

Residues 1–23 (MERKTLASLCFFLIVLLAAQVVA) form the signal peptide. 3 disulfides stabilise this stretch: Cys-39–Cys-64, Cys-49–Cys-71, and Cys-53–Cys-73.

As to expression, expressed in nodules, but not in leaves, stems, flowers and roots. In developing nodules, expressed close to the infection threads.

It localises to the secreted. Nodulation-related protein probably involved in the infection process. The polypeptide is Nodulin-1 (N1) (Medicago truncatula (Barrel medic)).